A 354-amino-acid polypeptide reads, in one-letter code: 3'-5' exonuclease (354 aa).

A disordered region spans residues 1-120 (MEKYLIKMPI…PSPEKEKPEK (120 aa)). A compositionally biased stretch (basic and acidic residues) spans 36–50 (TKKDTPKELKDKENA). Basic residues predominate over residues 59-70 (TKGRPGRPAVKR). The span at 71 to 91 (KNLDNPDAKAEKKATEEENPP) shows a compositional bias: basic and acidic residues. Phosphoserine is present on residues serine 104, serine 110, and serine 112. The 3'-5' exonuclease domain maps to 146 to 314 (VLQWVEKQKD…GQVIYRELER (169 aa)). Mg(2+)-binding residues include aspartate 163, glutamate 165, and aspartate 301.

The protein belongs to the WRNexo family.

Its subcellular location is the nucleus. Functionally, has exonuclease activity on both single-stranded and duplex templates bearing overhangs, but not blunt ended duplex DNA, and cleaves in a 3'-5' direction. Essential for the formation of DNA replication focal centers. Has an important role in maintaining genome stability. This Drosophila yakuba (Fruit fly) protein is 3'-5' exonuclease.